The chain runs to 259 residues: Deoxyribose-phosphate aldolase (259 aa).

D102 acts as the Proton donor/acceptor in catalysis. Residue K167 is the Schiff-base intermediate with acetaldehyde of the active site. The active-site Proton donor/acceptor is the K201.

Belongs to the DeoC/FbaB aldolase family. DeoC type 2 subfamily.

The protein localises to the cytoplasm. The enzyme catalyses 2-deoxy-D-ribose 5-phosphate = D-glyceraldehyde 3-phosphate + acetaldehyde. Its pathway is carbohydrate degradation; 2-deoxy-D-ribose 1-phosphate degradation; D-glyceraldehyde 3-phosphate and acetaldehyde from 2-deoxy-alpha-D-ribose 1-phosphate: step 2/2. In terms of biological role, catalyzes a reversible aldol reaction between acetaldehyde and D-glyceraldehyde 3-phosphate to generate 2-deoxy-D-ribose 5-phosphate. This chain is Deoxyribose-phosphate aldolase, found in Shigella flexneri.